The sequence spans 552 residues: Hydroxylamine reductase (552 aa).

The [2Fe-2S] cluster site is built by Cys-3, Cys-6, Cys-18, and Cys-25. His-250, Glu-274, Cys-318, Cys-406, Cys-434, Cys-459, Glu-493, and Lys-495 together coordinate hybrid [4Fe-2O-2S] cluster. Position 406 is a cysteine persulfide (Cys-406).

Belongs to the HCP family. [2Fe-2S] cluster serves as cofactor. The cofactor is hybrid [4Fe-2O-2S] cluster.

It localises to the cytoplasm. The enzyme catalyses A + NH4(+) + H2O = hydroxylamine + AH2 + H(+). Its function is as follows. Catalyzes the reduction of hydroxylamine to form NH(3) and H(2)O. In Shewanella woodyi (strain ATCC 51908 / MS32), this protein is Hydroxylamine reductase.